Here is a 283-residue protein sequence, read N- to C-terminus: Bifunctional protein FolD (283 aa).

NADP(+) is bound by residues 165–167 and S190; that span reads GRS.

It belongs to the tetrahydrofolate dehydrogenase/cyclohydrolase family. As to quaternary structure, homodimer.

The catalysed reaction is (6R)-5,10-methylene-5,6,7,8-tetrahydrofolate + NADP(+) = (6R)-5,10-methenyltetrahydrofolate + NADPH. It carries out the reaction (6R)-5,10-methenyltetrahydrofolate + H2O = (6R)-10-formyltetrahydrofolate + H(+). It participates in one-carbon metabolism; tetrahydrofolate interconversion. Catalyzes the oxidation of 5,10-methylenetetrahydrofolate to 5,10-methenyltetrahydrofolate and then the hydrolysis of 5,10-methenyltetrahydrofolate to 10-formyltetrahydrofolate. The chain is Bifunctional protein FolD from Paracidovorax citrulli (strain AAC00-1) (Acidovorax citrulli).